The chain runs to 837 residues: Leucine-zipper-like transcriptional regulator 1 (837 aa).

Ala-2 is modified (N-acetylalanine). Kelch repeat units follow at residues 76–125, 127–182, 184–235, 236–282, 292–338, and 396–447; these read AIYV…VYGS, MFVF…VYSD, LWIF…VCRD, KMFV…QRRY, HLYV…PERA, and AMYI…FVLG. The interval 324–352 is disordered; it reads SSDSEVGGAEMPERASSSEDASTLTSEER. 2 consecutive BTB domains span residues 440–534 and 664–733; these read CDVE…KYPR and CDIT…NMPP.

Belongs to the LZTR1 family. Homodimer. Component of the BCR(LZTR1) E3 ubiquitin ligase complex, at least composed of CUL3, LZTR1 and RBX1. Interacts with Ras (K-Ras/KRAS, N-Ras/NRAS and H-Ras/HRAS). Interacts with RAF1. Interacts with SHOC2. Interacts with PPP1CB. Post-translationally, phosphorylated on tyrosine upon induction of apoptosis, leading to its degradation by the proteasome. In terms of tissue distribution, widely expressed.

It is found in the endomembrane system. The protein localises to the recycling endosome. Its subcellular location is the golgi apparatus. It functions in the pathway protein modification; protein ubiquitination. Functionally, substrate-specific adapter of a BCR (BTB-CUL3-RBX1) E3 ubiquitin-protein ligase complex that mediates ubiquitination of Ras (K-Ras/KRAS, N-Ras/NRAS and H-Ras/HRAS). Is a negative regulator of RAS-MAPK signaling that acts by controlling Ras levels and decreasing Ras association with membranes. The chain is Leucine-zipper-like transcriptional regulator 1 from Mus musculus (Mouse).